Reading from the N-terminus, the 548-residue chain is Chaperonin GroEL (548 aa).

Residues 30–33 (TLGP), lysine 51, 87–91 (DGTTT), glycine 415, 479–481 (NAA), and aspartate 495 contribute to the ATP site.

This sequence belongs to the chaperonin (HSP60) family. As to quaternary structure, forms a cylinder of 14 subunits composed of two heptameric rings stacked back-to-back. Interacts with the co-chaperonin GroES.

It is found in the cytoplasm. It carries out the reaction ATP + H2O + a folded polypeptide = ADP + phosphate + an unfolded polypeptide.. Its function is as follows. Together with its co-chaperonin GroES, plays an essential role in assisting protein folding. The GroEL-GroES system forms a nano-cage that allows encapsulation of the non-native substrate proteins and provides a physical environment optimized to promote and accelerate protein folding. The polypeptide is Chaperonin GroEL (Serratia proteamaculans (strain 568)).